A 376-amino-acid polypeptide reads, in one-letter code: NAD-capped RNA hydrolase (376 aa).

4 residues coordinate Zn(2+): cysteine 182, cysteine 185, cysteine 200, and cysteine 211. Residues tyrosine 222, 258-260 (AGF), glutamate 274, glutamate 278, and glutamate 321 each bind substrate. Residues 223-351 (PRTDPCVIMV…KDGPAPILFP (129 aa)) form the Nudix hydrolase domain. Mg(2+) is bound by residues alanine 258, glutamate 274, glutamate 278, and glutamate 321. A Nudix box motif is present at residues 259 to 280 (GFLEPGESLEEAVVRETYEESG). Residues 374 to 376 (VKM) carry the Microbody targeting signal motif.

It belongs to the Nudix hydrolase family. NudC subfamily. In terms of assembly, homodimer. Requires Mg(2+) as cofactor. Zn(2+) serves as cofactor.

The enzyme catalyses a 5'-end NAD(+)-phospho-ribonucleoside in mRNA + H2O = a 5'-end phospho-adenosine-phospho-ribonucleoside in mRNA + beta-nicotinamide D-ribonucleotide + 2 H(+). It carries out the reaction NAD(+) + H2O = beta-nicotinamide D-ribonucleotide + AMP + 2 H(+). It catalyses the reaction NADH + H2O = reduced beta-nicotinamide D-ribonucleotide + AMP + 2 H(+). Its function is as follows. mRNA decapping enzyme that specifically removes the nicotinamide adenine dinucleotide (NAD) cap from a subset of mRNAs by hydrolyzing the diphosphate linkage to produce nicotinamide mononucleotide (NMN) and 5' monophosphate mRNA. The NAD-cap is present at the 5'-end of some RNAs; in contrast to the canonical N7 methylguanosine (m7G) cap, the NAD cap promotes mRNA decay. Mediates the hydrolysis of some nucleoside diphosphate derivatives. This Schizosaccharomyces pombe (strain 972 / ATCC 24843) (Fission yeast) protein is NAD-capped RNA hydrolase.